A 437-amino-acid chain; its full sequence is Glutamyl-tRNA reductase (437 aa).

Residues 49 to 52 (TCNR), Ser109, 114 to 116 (EGQ), and Gln120 contribute to the substrate site. The Nucleophile role is filled by Cys50. 198–203 (GAGRMS) serves as a coordination point for NADP(+).

It belongs to the glutamyl-tRNA reductase family. As to quaternary structure, homodimer.

The catalysed reaction is (S)-4-amino-5-oxopentanoate + tRNA(Glu) + NADP(+) = L-glutamyl-tRNA(Glu) + NADPH + H(+). Its pathway is porphyrin-containing compound metabolism; protoporphyrin-IX biosynthesis; 5-aminolevulinate from L-glutamyl-tRNA(Glu): step 1/2. It participates in porphyrin-containing compound metabolism; chlorophyll biosynthesis. Functionally, catalyzes the NADPH-dependent reduction of glutamyl-tRNA(Glu) to glutamate 1-semialdehyde (GSA). The polypeptide is Glutamyl-tRNA reductase (Synechococcus sp. (strain CC9311)).